Reading from the N-terminus, the 317-residue chain is Retinol dehydrogenase 16 (317 aa).

33 to 57 (FITGCDSGFGTLLARQLDRRGMRVL) contributes to the NAD(+) binding site. Residue Tyr176 is the Proton acceptor of the active site. The helical transmembrane segment at 289–309 (LFYLPLSYLPTFLVDALLYWT) threads the bilayer.

This sequence belongs to the short-chain dehydrogenases/reductases (SDR) family. In terms of assembly, homodimer. Not glycosylated.

The protein resides in the endoplasmic reticulum membrane. It is found in the microsome membrane. It catalyses the reaction all-trans-retinol--[retinol-binding protein] + NAD(+) = all-trans-retinal--[retinol-binding protein] + NADH + H(+). The catalysed reaction is 9-cis-retinol + NAD(+) = 9-cis-retinal + NADH + H(+). It carries out the reaction 11-cis-retinol + NAD(+) = 11-cis-retinal + NADH + H(+). The enzyme catalyses 13-cis-retinol + NAD(+) = 13-cis-retinal + NADH + H(+). It catalyses the reaction androsterone + NAD(+) = 5alpha-androstan-3,17-dione + NADH + H(+). The catalysed reaction is 5alpha-androstane-3alpha,17beta-diol + NAD(+) = 17beta-hydroxy-5alpha-androstan-3-one + NADH + H(+). The protein operates within cofactor metabolism; retinol metabolism. Functionally, oxidoreductase with a preference for NAD. Oxidizes all-trans-retinol, 9-cis-retinol, 11-cis-retinol and 13-cis-retinol to the corresponding aldehydes. Has higher activity towards CRBP-bound retinol than with free retinol. Oxidizes 3-alpha-hydroxysteroids. Oxidizes androstanediol and androsterone to dihydrotestosterone and androstanedione. Can also catalyze the reverse reaction. The polypeptide is Retinol dehydrogenase 16 (Mus musculus (Mouse)).